The following is a 465-amino-acid chain: Pancreatic triacylglycerol lipase (465 aa).

A signal peptide spans 1–16 (MLPLWTLSLLLGAVAG). Intrachain disulfides connect cysteine 20–cysteine 26 and cysteine 107–cysteine 118. Serine 169 acts as the Nucleophile in catalysis. Asparagine 183 carries an N-linked (GlcNAc...) asparagine glycan. Aspartate 193 functions as the Charge relay system in the catalytic mechanism. Ca(2+) is bound by residues glutamate 204, arginine 207, aspartate 209, and aspartate 212. The cysteines at positions 254 and 278 are disulfide-linked. The Charge relay system role is filled by histidine 280. Intrachain disulfides connect cysteine 302–cysteine 313, cysteine 316–cysteine 321, and cysteine 449–cysteine 465. One can recognise a PLAT domain in the interval 355-465 (WRYKVSVTLS…EEVLLTLTPC (111 aa)).

This sequence belongs to the AB hydrolase superfamily. Lipase family. In terms of assembly, forms a 1:1 stoichiometric complex with (pro)colipase/CLPS.

The protein localises to the secreted. It catalyses the reaction a triacylglycerol + H2O = a diacylglycerol + a fatty acid + H(+). It carries out the reaction 1,2,3-tributanoylglycerol + H2O = dibutanoylglycerol + butanoate + H(+). The catalysed reaction is 1,2,3-tri-(9Z-octadecenoyl)-glycerol + H2O = di-(9Z)-octadecenoylglycerol + (9Z)-octadecenoate + H(+). The enzyme catalyses all-trans-retinyl hexadecanoate + H2O = all-trans-retinol + hexadecanoate + H(+). It catalyses the reaction 1,2-di-(9Z-octadecenoyl)-glycerol + H2O = (9Z-octadecenoyl)-glycerol + (9Z)-octadecenoate + H(+). With respect to regulation, inhibited by bile salts, is reactivated by (pro)colipase/CLPS. Functionally, plays an important role in fat metabolism. It preferentially splits the esters of long-chain fatty acids at positions 1 and 3, producing mainly 2-monoacylglycerol and free fatty acids, and shows considerably higher activity against insoluble emulsified substrates than against soluble ones. This Homo sapiens (Human) protein is Pancreatic triacylglycerol lipase.